The following is a 176-amino-acid chain: Translation initiation factor IF-3 (176 aa).

This sequence belongs to the IF-3 family. As to quaternary structure, monomer.

It is found in the cytoplasm. Its function is as follows. IF-3 binds to the 30S ribosomal subunit and shifts the equilibrium between 70S ribosomes and their 50S and 30S subunits in favor of the free subunits, thus enhancing the availability of 30S subunits on which protein synthesis initiation begins. The sequence is that of Translation initiation factor IF-3 from Streptococcus thermophilus (strain ATCC BAA-491 / LMD-9).